Consider the following 441-residue polypeptide: Chitinase-like protein Idgf3 (441 aa).

Residues 1–23 (MTGSLWLSLALSLAVLAQFKVSA) form the signal peptide. Residues 25 to 441 (PNLVCFYDSQ…MLRAIKYRLL (417 aa)) form the GH18 domain. C29 and C56 are joined by a disulfide. N221 carries N-linked (GlcNAc...) asparagine glycosylation. Residues 307–331 (KDSGDSGMPVVPSTQGPAPAGPQSK) form a disordered region. C342 and C425 are disulfide-bonded.

The protein belongs to the glycosyl hydrolase 18 family. IDGF subfamily. In terms of processing, glycosylated. In terms of tissue distribution, primarily expressed in yolk cells and fat body. In larvae, it is expressed in small and large salivary gland cells, and weakly expressed in imaginal disks. Less expressed than Idgf2 and Idgf4.

It localises to the secreted. Functionally, cooperates with insulin-like peptides to stimulate the proliferation, polarization and motility of imaginal disk cells. May act by stabilizing the binding of insulin-like peptides to its receptor through a simultaneous interaction with both molecules to form a multiprotein signaling complex. The chain is Chitinase-like protein Idgf3 (Idgf3) from Drosophila melanogaster (Fruit fly).